The following is a 406-amino-acid chain: Argininosuccinate synthase (406 aa).

Residues 11–19 (AYSGGLDTS) and alanine 38 contribute to the ATP site. Positions 91 and 96 each coordinate L-citrulline. Residue glycine 121 coordinates ATP. Positions 123, 127, and 128 each coordinate L-aspartate. Position 127 (asparagine 127) interacts with L-citrulline. Positions 131, 181, 190, 266, and 278 each coordinate L-citrulline.

This sequence belongs to the argininosuccinate synthase family. Type 1 subfamily. Homotetramer.

It localises to the cytoplasm. It catalyses the reaction L-citrulline + L-aspartate + ATP = 2-(N(omega)-L-arginino)succinate + AMP + diphosphate + H(+). It participates in amino-acid biosynthesis; L-arginine biosynthesis; L-arginine from L-ornithine and carbamoyl phosphate: step 2/3. The chain is Argininosuccinate synthase from Campylobacter jejuni (strain RM1221).